We begin with the raw amino-acid sequence, 139 residues long: Actin-depolymerizing factor 7 (139 aa).

One can recognise an ADF-H domain in the interval 7 to 139 (GMAVDDECKL…GLDVIRGRAN (133 aa)).

It belongs to the actin-binding proteins ADF family.

Actin-depolymerizing protein. Severs actin filaments (F-actin) and binds to actin monomers. The sequence is that of Actin-depolymerizing factor 7 (ADF7) from Oryza sativa subsp. japonica (Rice).